Here is a 376-residue protein sequence, read N- to C-terminus: Transcriptional regulator STP4 (376 aa).

3 disordered regions span residues 25 to 58 (QNYC…PHAS), 89 to 122 (SSNS…SNSS), and 137 to 210 (VNCI…NWKP). Composition is skewed to low complexity over residues 32 to 50 (SPSP…TSPP) and 89 to 103 (SSNS…YSPT). Polar residues-rich tracts occupy residues 146 to 183 (PRST…LSVK) and 191 to 200 (EPQNSNTIIS). A C2H2-type zinc finger spans residues 241–263 (HICKYCERGFARPNDLFRHVKCH).

It is found in the nucleus. Probable transcription factor involved in response to cell wall damage. The chain is Transcriptional regulator STP4 (STP4) from Candida albicans (strain SC5314 / ATCC MYA-2876) (Yeast).